Consider the following 263-residue polypeptide: Histidine racemase (263 aa).

C67 acts as the Proton acceptor in catalysis. C209 serves as the catalytic Proton donor.

Belongs to the histidine racemase family. In terms of assembly, homodimer.

The catalysed reaction is L-histidine = D-histidine. Cofactor-independent isomerase that catalyzes the reversible conversion of L-histidine to D-histidine. May play a role in growth of F.nucleatum. The polypeptide is Histidine racemase (Fusobacterium nucleatum subsp. nucleatum (strain ATCC 23726 / VPI 4351)).